The sequence spans 305 residues: N-acetylneuraminate lyase A (305 aa).

Threonine 51 and threonine 52 together coordinate aceneuramate. The Proton donor role is filled by tyrosine 143. Lysine 173 (schiff-base intermediate with substrate) is an active-site residue. Residues serine 175, glycine 197, aspartate 199, glutamate 200, and serine 216 each coordinate aceneuramate.

The protein belongs to the DapA family. NanA subfamily. As to quaternary structure, homotetramer.

The protein localises to the cytoplasm. The catalysed reaction is aceneuramate = aldehydo-N-acetyl-D-mannosamine + pyruvate. It participates in amino-sugar metabolism; N-acetylneuraminate degradation. Catalyzes the cleavage of N-acetylneuraminic acid (sialic acid) to form pyruvate and N-acetylmannosamine via a Schiff base intermediate. It prevents sialic acids from being recycled and returning to the cell surface. Involved in the N-glycolylneuraminic acid (Neu5Gc) degradation pathway. In Xenopus laevis (African clawed frog), this protein is N-acetylneuraminate lyase A (npl-a).